Here is a 131-residue protein sequence, read N- to C-terminus: Phosphomevalonate dehydratase small subunit (131 aa).

Residue S62 is the Proton acceptor of the active site.

Belongs to the AcnX type II small subunit family. As to quaternary structure, heterodimer composed of a large subunit (PMDh-L) and a small subunit (PMDh-S).

It carries out the reaction (R)-5-phosphomevalonate = (2E)-3-methyl-5-phosphooxypent-2-enoate + H2O. It functions in the pathway isoprenoid biosynthesis; isopentenyl diphosphate biosynthesis via mevalonate pathway. Component of a hydro-lyase that catalyzes the dehydration of mevalonate 5-phosphate (MVA5P) to form trans-anhydromevalonate 5-phosphate (tAHMP). Involved in the archaeal mevalonate (MVA) pathway, which provides fundamental precursors for isoprenoid biosynthesis, such as isopentenyl diphosphate (IPP) and dimethylallyl diphosphate (DMAPP). The chain is Phosphomevalonate dehydratase small subunit from Thermococcus gammatolerans (strain DSM 15229 / JCM 11827 / EJ3).